A 76-amino-acid chain; its full sequence is UPF0248 protein MMP0286 (76 aa).

This sequence belongs to the UPF0248 family.

The polypeptide is UPF0248 protein MMP0286 (Methanococcus maripaludis (strain DSM 14266 / JCM 13030 / NBRC 101832 / S2 / LL)).